The following is a 292-amino-acid chain: MAVPTELHGGSVKETAAEKESRVLEPGAAPFGNFPHYSRFHPPEQRLRLLPPELLRQLFPESPENGPILGLDVGCNSGDLSVALYKHFLSLPDGKTCSDASREFRLLCCDIDPVLVKRAEKECPFPDALTFITLDFMNQRTRKVLLSSFLSQFGRSVFDIGFCMSITMWIHLNHGDHGLWEFLARLSSLCRYLLVEPQPWKCYRAAARRLRKLGLHDFDHFHSLTIRGDMPNQIVQILTQDHGMELICCFGNTSWDRSLLLFRAKQTIETHPIPESLIEKGKEKNRLSFQKQ.

Residues 1 to 20 (MAVPTELHGGSVKETAAEKE) form a disordered region. Residues Arg-46, Asn-76, Asp-110, 135–136 (DF), and Met-164 contribute to the S-adenosyl-L-methionine site. Residues 53-274 (ELLRQLFPES…KQTIETHPIP (222 aa)) enclose the Bin3-type SAM domain.

The protein belongs to the methyltransferase superfamily. Interacts with DICER1; the interaction may be mediated by RNA.

The protein resides in the cytoplasm. It catalyses the reaction a 5'-end 5'-phospho-ribonucleoside-RNA + S-adenosyl-L-methionine = a 5'-end (5'-methylphospho)-ribonucleoside-RNA + S-adenosyl-L-homocysteine. The catalysed reaction is a 5'-end 5'-phospho-ribonucleoside-RNA + 2 S-adenosyl-L-methionine = a 5'-end (5'-bismethylphospho)-ribonucleoside-RNA + 2 S-adenosyl-L-homocysteine. Functionally, O-methyltransferase that specifically monomethylates 5'-monophosphate of cytoplasmic histidyl tRNA (tRNA(His)), acting as a capping enzyme by protecting tRNA(His) from cleavage by DICER1. Also able, with less efficiently, to methylate the 5' monophosphate of a subset of pre-miRNAs, acting as a negative regulator of miRNA processing. The 5' monophosphate of pre-miRNAs is recognized by DICER1 and is required for pre-miRNAs processing: methylation at this position reduces the processing of pre-miRNAs by DICER1. Was also reported to mediate dimethylation of pre-miR-145; however dimethylation cannot be reproduced by another group which observes a monomethylation of pre-miR-145. This Pongo abelii (Sumatran orangutan) protein is RNA 5'-monophosphate methyltransferase (BCDIN3D).